The sequence spans 1373 residues: DNA-directed RNA polymerase subunit beta (1373 aa).

Belongs to the RNA polymerase beta chain family. The RNAP catalytic core consists of 2 alpha, 1 beta, 1 beta' and 1 omega subunit. When a sigma factor is associated with the core the holoenzyme is formed, which can initiate transcription.

It catalyses the reaction RNA(n) + a ribonucleoside 5'-triphosphate = RNA(n+1) + diphosphate. Its function is as follows. DNA-dependent RNA polymerase catalyzes the transcription of DNA into RNA using the four ribonucleoside triphosphates as substrates. This chain is DNA-directed RNA polymerase subunit beta, found in Rickettsia rickettsii (strain Iowa).